The following is a 509-amino-acid chain: Aspartyl/glutamyl-tRNA(Asn/Gln) amidotransferase subunit B (509 aa).

This sequence belongs to the GatB/GatE family. GatB subfamily. Heterotrimer of A, B and C subunits.

It carries out the reaction L-glutamyl-tRNA(Gln) + L-glutamine + ATP + H2O = L-glutaminyl-tRNA(Gln) + L-glutamate + ADP + phosphate + H(+). It catalyses the reaction L-aspartyl-tRNA(Asn) + L-glutamine + ATP + H2O = L-asparaginyl-tRNA(Asn) + L-glutamate + ADP + phosphate + 2 H(+). Functionally, allows the formation of correctly charged Asn-tRNA(Asn) or Gln-tRNA(Gln) through the transamidation of misacylated Asp-tRNA(Asn) or Glu-tRNA(Gln) in organisms which lack either or both of asparaginyl-tRNA or glutaminyl-tRNA synthetases. The reaction takes place in the presence of glutamine and ATP through an activated phospho-Asp-tRNA(Asn) or phospho-Glu-tRNA(Gln). This Psychrobacter cryohalolentis (strain ATCC BAA-1226 / DSM 17306 / VKM B-2378 / K5) protein is Aspartyl/glutamyl-tRNA(Asn/Gln) amidotransferase subunit B.